Here is a 97-residue protein sequence, read N- to C-terminus: Ferredoxin-3 (97 aa).

2 4Fe-4S ferredoxin-type domains span residues phenylalanine 18–leucine 47 and lysine 65–leucine 95. The [4Fe-4S] cluster site is built by cysteine 27, cysteine 30, cysteine 33, cysteine 37, cysteine 75, cysteine 78, cysteine 81, and cysteine 85.

As to quaternary structure, homodimer. [4Fe-4S] cluster is required as a cofactor.

Functionally, ferredoxins are iron-sulfur proteins that transfer electrons in a wide variety of metabolic reactions. This is Ferredoxin-3 (fdxB) from Nostoc sp. (strain PCC 7120 / SAG 25.82 / UTEX 2576).